The primary structure comprises 470 residues: ATP synthase subunit beta (470 aa).

Residue G151–T158 coordinates ATP.

This sequence belongs to the ATPase alpha/beta chains family. As to quaternary structure, F-type ATPases have 2 components, CF(1) - the catalytic core - and CF(0) - the membrane proton channel. CF(1) has five subunits: alpha(3), beta(3), gamma(1), delta(1), epsilon(1). CF(0) has three main subunits: a(1), b(2) and c(9-12). The alpha and beta chains form an alternating ring which encloses part of the gamma chain. CF(1) is attached to CF(0) by a central stalk formed by the gamma and epsilon chains, while a peripheral stalk is formed by the delta and b chains.

Its subcellular location is the cell membrane. The enzyme catalyses ATP + H2O + 4 H(+)(in) = ADP + phosphate + 5 H(+)(out). Its function is as follows. Produces ATP from ADP in the presence of a proton gradient across the membrane. The catalytic sites are hosted primarily by the beta subunits. This chain is ATP synthase subunit beta, found in Mycoplasma mobile (strain ATCC 43663 / 163K / NCTC 11711) (Mesomycoplasma mobile).